A 92-amino-acid polypeptide reads, in one-letter code: Isoleucine--tRNA ligase (92 aa).

Zn(2+)-binding residues include Cys55, Cys58, Cys75, and Cys78.

Belongs to the class-I aminoacyl-tRNA synthetase family. IleS type 1 subfamily. Monomer. The cofactor is Zn(2+).

The protein resides in the cytoplasm. The enzyme catalyses tRNA(Ile) + L-isoleucine + ATP = L-isoleucyl-tRNA(Ile) + AMP + diphosphate. Its function is as follows. Catalyzes the attachment of isoleucine to tRNA(Ile). As IleRS can inadvertently accommodate and process structurally similar amino acids such as valine, to avoid such errors it has two additional distinct tRNA(Ile)-dependent editing activities. One activity is designated as 'pretransfer' editing and involves the hydrolysis of activated Val-AMP. The other activity is designated 'posttransfer' editing and involves deacylation of mischarged Val-tRNA(Ile). This chain is Isoleucine--tRNA ligase (ileS), found in Klebsiella aerogenes (Enterobacter aerogenes).